A 303-amino-acid chain; its full sequence is Coenzyme PQQ synthesis protein B (303 aa).

The protein belongs to the PqqB family.

The protein operates within cofactor biosynthesis; pyrroloquinoline quinone biosynthesis. Its function is as follows. May be involved in the transport of PQQ or its precursor to the periplasm. The protein is Coenzyme PQQ synthesis protein B of Pseudomonas putida (strain ATCC 700007 / DSM 6899 / JCM 31910 / BCRC 17059 / LMG 24140 / F1).